Here is a 239-residue protein sequence, read N- to C-terminus: Ribosomal RNA large subunit methyltransferase E (239 aa).

The interval Met1–Lys20 is disordered. Positions Thr11 to Lys20 are enriched in basic residues. 5 residues coordinate S-adenosyl-L-methionine: Gly81, Trp83, Asp104, Asp120, and Asp144. The active-site Proton acceptor is Lys184.

Belongs to the class I-like SAM-binding methyltransferase superfamily. RNA methyltransferase RlmE family.

The protein resides in the cytoplasm. It catalyses the reaction uridine(2552) in 23S rRNA + S-adenosyl-L-methionine = 2'-O-methyluridine(2552) in 23S rRNA + S-adenosyl-L-homocysteine + H(+). Specifically methylates the uridine in position 2552 of 23S rRNA at the 2'-O position of the ribose in the fully assembled 50S ribosomal subunit. This Rhizobium johnstonii (strain DSM 114642 / LMG 32736 / 3841) (Rhizobium leguminosarum bv. viciae) protein is Ribosomal RNA large subunit methyltransferase E.